We begin with the raw amino-acid sequence, 129 residues long: Aldose 1-epimerase (129 aa).

It belongs to the aldose epimerase family.

It catalyses the reaction alpha-D-glucose = beta-D-glucose. It participates in carbohydrate metabolism; hexose metabolism. Mutarotase converts alpha-aldose to the beta-anomer. It is active on D-glucose, L-arabinose, D-xylose, D-galactose, maltose and lactose. The sequence is that of Aldose 1-epimerase (galM) from Lactobacillus helveticus (Lactobacillus suntoryeus).